The primary structure comprises 209 residues: FK506-binding protein 2B (209 aa).

The first 19 residues, 1-19 (MRFSLLALLGTIVATSVSA), serve as a signal peptide directing secretion. The 90-residue stretch at 47-136 (GDELSMHYTG…VFEVELLEIK (90 aa)) folds into the PPIase FKBP-type domain. Residues 157 to 177 (FTSPSFLVSTGIIVALFLIVF) form a helical membrane-spanning segment. Residues 178-207 (KMAKKQDIAEANEKAAAATAEASTEKKEEK) adopt a coiled-coil conformation. The tract at residues 190–209 (EKAAAATAEASTEKKEEKKE) is disordered. Positions 200–209 (STEKKEEKKE) are enriched in basic and acidic residues.

The protein belongs to the FKBP-type PPIase family. FKBP2 subfamily.

Its subcellular location is the membrane. It carries out the reaction [protein]-peptidylproline (omega=180) = [protein]-peptidylproline (omega=0). With respect to regulation, inhibited by both FK506 and rapamycin. PPIases accelerate the folding of proteins. It catalyzes the cis-trans isomerization of proline imidic peptide bonds in oligopeptides. In Rhizopus delemar (strain RA 99-880 / ATCC MYA-4621 / FGSC 9543 / NRRL 43880) (Mucormycosis agent), this protein is FK506-binding protein 2B (FKBP3).